Reading from the N-terminus, the 443-residue chain is Thymidine phosphorylase (443 aa).

This sequence belongs to the thymidine/pyrimidine-nucleoside phosphorylase family. Homodimer.

It catalyses the reaction thymidine + phosphate = 2-deoxy-alpha-D-ribose 1-phosphate + thymine. It functions in the pathway pyrimidine metabolism; dTMP biosynthesis via salvage pathway; dTMP from thymine: step 1/2. Its function is as follows. The enzymes which catalyze the reversible phosphorolysis of pyrimidine nucleosides are involved in the degradation of these compounds and in their utilization as carbon and energy sources, or in the rescue of pyrimidine bases for nucleotide synthesis. This Shewanella halifaxensis (strain HAW-EB4) protein is Thymidine phosphorylase.